A 233-amino-acid polypeptide reads, in one-letter code: uncharacterized protein (233 aa).

6 helical membrane-spanning segments follow: residues 7–27 (VPIF…LLAY), 36–56 (YEFE…ILIP), 62–82 (MFVL…KYLA), 119–139 (LIIA…AILM), 159–179 (PLYP…VGLV), and 188–208 (ILLA…APHI).

Its subcellular location is the cell membrane. This is an uncharacterized protein from Methanocaldococcus jannaschii (strain ATCC 43067 / DSM 2661 / JAL-1 / JCM 10045 / NBRC 100440) (Methanococcus jannaschii).